The sequence spans 396 residues: Pyridinium-3,5-bisthiocarboxylic acid mononucleotide nickel insertion protein (396 aa).

It belongs to the LarC family.

The enzyme catalyses Ni(II)-pyridinium-3,5-bisthiocarboxylate mononucleotide = pyridinium-3,5-bisthiocarboxylate mononucleotide + Ni(2+). In terms of biological role, involved in the biosynthesis of a nickel-pincer cofactor ((SCS)Ni(II) pincer complex). Binds Ni(2+), and functions in nickel delivery to pyridinium-3,5-bisthiocarboxylic acid mononucleotide (P2TMN), to form the mature cofactor. Is thus probably required for the activation of nickel-pincer cofactor-dependent enzymes. The sequence is that of Pyridinium-3,5-bisthiocarboxylic acid mononucleotide nickel insertion protein from Moorella thermoacetica (strain ATCC 39073 / JCM 9320).